Here is a 207-residue protein sequence, read N- to C-terminus: Large ribosomal subunit protein uL4 (207 aa).

Residues 44–77 are disordered; it reads RRQGTHDTKTRSEVRGGGRKPWRQKGTGRARHGT. The span at 47–59 shows a compositional bias: basic and acidic residues; it reads GTHDTKTRSEVRG. Over residues 60-77 the composition is skewed to basic residues; that stretch reads GGRKPWRQKGTGRARHGT.

The protein belongs to the universal ribosomal protein uL4 family. As to quaternary structure, part of the 50S ribosomal subunit.

Its function is as follows. One of the primary rRNA binding proteins, this protein initially binds near the 5'-end of the 23S rRNA. It is important during the early stages of 50S assembly. It makes multiple contacts with different domains of the 23S rRNA in the assembled 50S subunit and ribosome. Functionally, forms part of the polypeptide exit tunnel. The sequence is that of Large ribosomal subunit protein uL4 from Desulforudis audaxviator (strain MP104C).